Here is a 227-residue protein sequence, read N- to C-terminus: Endolytic peptidoglycan transglycosylase RlpA (227 aa).

An N-terminal signal peptide occupies residues 1-21 (MMNHKFVLLILLIFYCFFLSG). Cys-22 carries N-palmitoyl cysteine lipidation. A lipid anchor (S-diacylglycerol cysteine) is attached at Cys-22.

This sequence belongs to the RlpA family.

It localises to the cell membrane. Lytic transglycosylase with a strong preference for naked glycan strands that lack stem peptides. In Rickettsia bellii (strain RML369-C), this protein is Endolytic peptidoglycan transglycosylase RlpA.